Here is a 123-residue protein sequence, read N- to C-terminus: Dormancy-associated protein homolog 4 (123 aa).

Residues 7–86 (LWDETVAGPT…NPGTPLTPGT (80 aa)) form a disordered region. Over residues 30–46 (LSTVRSSPPSLSSDQVT) the composition is skewed to low complexity. Polar residues-rich tracts occupy residues 47–58 (RSIMVTKGNNNV) and 71–80 (PTCSSSNPGT). Phosphoserine is present on serine 74.

This sequence belongs to the DRM1/ARP family.

The polypeptide is Dormancy-associated protein homolog 4 (Arabidopsis thaliana (Mouse-ear cress)).